The following is a 31-amino-acid chain: Cytochrome b6-f complex subunit 6 (31 aa).

A helical membrane pass occupies residues 4–26 (LTSYFGFLLAALTITSALFIGLN).

The protein belongs to the PetL family. As to quaternary structure, the 4 large subunits of the cytochrome b6-f complex are cytochrome b6, subunit IV (17 kDa polypeptide, PetD), cytochrome f and the Rieske protein, while the 4 small subunits are PetG, PetL, PetM and PetN. The complex functions as a dimer.

Its subcellular location is the plastid. The protein localises to the chloroplast thylakoid membrane. Component of the cytochrome b6-f complex, which mediates electron transfer between photosystem II (PSII) and photosystem I (PSI), cyclic electron flow around PSI, and state transitions. PetL is important for photoautotrophic growth as well as for electron transfer efficiency and stability of the cytochrome b6-f complex. The protein is Cytochrome b6-f complex subunit 6 of Blitum bonus-henricus (Good King Henry).